We begin with the raw amino-acid sequence, 179 residues long: Segregation and condensation protein B (179 aa).

This sequence belongs to the ScpB family. In terms of assembly, homodimer. Homodimerization may be required to stabilize the binding of ScpA to the Smc head domains. Component of a cohesin-like complex composed of ScpA, ScpB and the Smc homodimer, in which ScpA and ScpB bind to the head domain of Smc. The presence of the three proteins is required for the association of the complex with DNA.

It localises to the cytoplasm. In terms of biological role, participates in chromosomal partition during cell division. May act via the formation of a condensin-like complex containing Smc and ScpA that pull DNA away from mid-cell into both cell halves. In Staphylococcus haemolyticus (strain JCSC1435), this protein is Segregation and condensation protein B.